Consider the following 678-residue polypeptide: Glycine--tRNA ligase beta subunit (678 aa).

It belongs to the class-II aminoacyl-tRNA synthetase family. In terms of assembly, tetramer of two alpha and two beta subunits.

It localises to the cytoplasm. The catalysed reaction is tRNA(Gly) + glycine + ATP = glycyl-tRNA(Gly) + AMP + diphosphate. This Streptococcus thermophilus (strain ATCC BAA-491 / LMD-9) protein is Glycine--tRNA ligase beta subunit.